The primary structure comprises 508 residues: Photosystem II CP47 reaction center protein (508 aa).

6 helical membrane passes run 21-36, 101-115, 140-156, 203-218, 237-252, and 457-472; these read AVHLMHTALVSGWAGS, IVLSGLLFLAAIWHW, GIHLFLSGVLCFGFGAF, IAAGILGILAGLFHLS, VLSSSIAAVFFAAFVV, and TFALLFFFGHIWHGAR.

Belongs to the PsbB/PsbC family. PsbB subfamily. As to quaternary structure, PSII is composed of 1 copy each of membrane proteins PsbA, PsbB, PsbC, PsbD, PsbE, PsbF, PsbH, PsbI, PsbJ, PsbK, PsbL, PsbM, PsbT, PsbX, PsbY, PsbZ, Psb30/Ycf12, at least 3 peripheral proteins of the oxygen-evolving complex and a large number of cofactors. It forms dimeric complexes. The cofactor is Binds multiple chlorophylls. PSII binds additional chlorophylls, carotenoids and specific lipids..

The protein resides in the plastid. Its subcellular location is the chloroplast thylakoid membrane. One of the components of the core complex of photosystem II (PSII). It binds chlorophyll and helps catalyze the primary light-induced photochemical processes of PSII. PSII is a light-driven water:plastoquinone oxidoreductase, using light energy to abstract electrons from H(2)O, generating O(2) and a proton gradient subsequently used for ATP formation. The chain is Photosystem II CP47 reaction center protein from Anthoceros angustus (Hornwort).